We begin with the raw amino-acid sequence, 496 residues long: Thiamine transporter 2 (496 aa).

The Cytoplasmic portion of the chain corresponds to 1 to 7; that stretch reads MDCYRTS. Residues 8–28 traverse the membrane as a helical segment; it reads LSSSWIYPTVILCLFGFFSMM. The Extracellular segment spans residues 29 to 53; it reads RPSEPFLIPYLSGPDKNLTSAEITN. The N-linked (GlcNAc...) asparagine glycan is linked to Asn45. Residues 54-74 form a helical membrane-spanning segment; the sequence is EIFPVWTYSYLVLLLPVFVLT. Residues 75 to 81 are Cytoplasmic-facing; the sequence is DYVRYKP. The chain crosses the membrane as a helical span at residues 82 to 102; the sequence is VIILQGISFIITWLLLLFGQG. The Extracellular portion of the chain corresponds to 103–110; that stretch reads VKTMQVVE. Residues 111–131 form a helical membrane-spanning segment; it reads FFYGMVTAAEVAYYAYIYSVV. At 132–144 the chain is on the cytoplasmic side; sequence SPEHYQRVSGYCR. Residues 145 to 165 form a helical membrane-spanning segment; the sequence is SVTLAAYTAGSVLAQLLVSLA. Asn166 carries an N-linked (GlcNAc...) asparagine glycan. Residues 166–169 are Extracellular-facing; that stretch reads NMSY. Residues 170 to 190 traverse the membrane as a helical segment; that stretch reads FYLNVISLASVSVAFLFSLFL. Topologically, residues 191 to 282 are cytoplasmic; it reads PMPKKSMFFH…YSSKRLFYWS (92 aa). A helical membrane pass occupies residues 283-303; sequence LWWAFATAGFNQVLNYVQILW. Residues 304–316 lie on the Extracellular side of the membrane; it reads DYKAPSQDSSIYN. The helical transmembrane segment at 317–337 threads the bilayer; sequence GAVEAIATFGGAVAAFAVGYV. Over 338–342 the chain is Cytoplasmic; it reads KVNWD. The helical transmembrane segment at 343-363 threads the bilayer; sequence LLGELALVVFSVVNAGSLFLM. Residues 364–375 lie on the Extracellular side of the membrane; sequence HYTANIWACYAG. Residues 376-396 form a helical membrane-spanning segment; that stretch reads YLIFKSSYMLLITIAVFQIAV. Over 397–405 the chain is Cytoplasmic; that stretch reads NLNVERYAL. A helical transmembrane segment spans residues 406–426; the sequence is VFGINTFIALVIQTIMTVIVV. Residues 427 to 434 are Extracellular-facing; sequence DQRGLNLP. A helical transmembrane segment spans residues 435–455; that stretch reads VSIQFLVYGSYFAVIAGIFLM. The Cytoplasmic portion of the chain corresponds to 456–496; it reads RSMYITYSTKSQKDVQSPAPSENPDVSHPEEESNIIMSTKL. The disordered stretch occupies residues 468–496; it reads KDVQSPAPSENPDVSHPEEESNIIMSTKL.

It belongs to the reduced folate carrier (RFC) transporter (TC 2.A.48) family. As to expression, widely expressed but most abundant in placenta, kidney and liver.

The protein resides in the membrane. It carries out the reaction thiamine(out) + H(+)(in) = thiamine(in) + H(+)(out). The enzyme catalyses pyridoxine(out) + n H(+)(out) = pyridoxine(in) + n H(+)(in). Its activity is regulated as follows. Pyridoxine transport is inhibited by carbonyl cyanide p-trifluoromethoxyphenylhydrazone (FCCP) and carbonyl cyanide m-chlorophenylhydrazone (CCCP). In terms of biological role, mediates high affinity thiamine uptake, probably via a proton anti-port mechanism. Has no folate transport activity. Mediates H(+)-dependent pyridoxine transport. This chain is Thiamine transporter 2 (SLC19A3), found in Homo sapiens (Human).